The following is a 154-amino-acid chain: Small heat shock protein C2 (154 aa).

Residues 43–154 (STEKNLIPRT…GKTRKIEVKG (112 aa)) enclose the sHSP domain.

The protein belongs to the small heat shock protein (HSP20) family.

The chain is Small heat shock protein C2 (hspC2) from Rickettsia felis (strain ATCC VR-1525 / URRWXCal2) (Rickettsia azadi).